A 612-amino-acid chain; its full sequence is Dihydroxy-acid dehydratase (612 aa).

Aspartate 81 is a Mg(2+) binding site. Residue cysteine 122 coordinates [2Fe-2S] cluster. 2 residues coordinate Mg(2+): aspartate 123 and lysine 124. At lysine 124 the chain carries N6-carboxylysine. Cysteine 196 is a [2Fe-2S] cluster binding site. Position 492 (glutamate 492) interacts with Mg(2+). The active-site Proton acceptor is the serine 518.

Belongs to the IlvD/Edd family. In terms of assembly, homodimer. [2Fe-2S] cluster serves as cofactor. The cofactor is Mg(2+).

The catalysed reaction is (2R)-2,3-dihydroxy-3-methylbutanoate = 3-methyl-2-oxobutanoate + H2O. It carries out the reaction (2R,3R)-2,3-dihydroxy-3-methylpentanoate = (S)-3-methyl-2-oxopentanoate + H2O. It functions in the pathway amino-acid biosynthesis; L-isoleucine biosynthesis; L-isoleucine from 2-oxobutanoate: step 3/4. The protein operates within amino-acid biosynthesis; L-valine biosynthesis; L-valine from pyruvate: step 3/4. Functionally, functions in the biosynthesis of branched-chain amino acids. Catalyzes the dehydration of (2R,3R)-2,3-dihydroxy-3-methylpentanoate (2,3-dihydroxy-3-methylvalerate) into 2-oxo-3-methylpentanoate (2-oxo-3-methylvalerate) and of (2R)-2,3-dihydroxy-3-methylbutanoate (2,3-dihydroxyisovalerate) into 2-oxo-3-methylbutanoate (2-oxoisovalerate), the penultimate precursor to L-isoleucine and L-valine, respectively. In Cereibacter sphaeroides (strain ATCC 17029 / ATH 2.4.9) (Rhodobacter sphaeroides), this protein is Dihydroxy-acid dehydratase.